A 175-amino-acid polypeptide reads, in one-letter code: Chorismate pyruvate-lyase (175 aa).

Residues Met-36, Arg-78, Leu-116, and Glu-157 each coordinate substrate.

This sequence belongs to the UbiC family. In terms of assembly, monomer.

The protein localises to the cytoplasm. The catalysed reaction is chorismate = 4-hydroxybenzoate + pyruvate. It participates in cofactor biosynthesis; ubiquinone biosynthesis. In terms of biological role, removes the pyruvyl group from chorismate, with concomitant aromatization of the ring, to provide 4-hydroxybenzoate (4HB) for the ubiquinone pathway. This Hamiltonella defensa subsp. Acyrthosiphon pisum (strain 5AT) protein is Chorismate pyruvate-lyase.